Reading from the N-terminus, the 207-residue chain is Outer-membrane lipoprotein LolB (207 aa).

Residues 1-21 (MPIRKVSLLRLIPLASLVLAA) form the signal peptide. Residue C22 is the site of N-palmitoyl cysteine attachment. A lipid anchor (S-diacylglycerol cysteine) is attached at C22.

Belongs to the LolB family. As to quaternary structure, monomer.

It is found in the cell outer membrane. Functionally, plays a critical role in the incorporation of lipoproteins in the outer membrane after they are released by the LolA protein. In Serratia proteamaculans (strain 568), this protein is Outer-membrane lipoprotein LolB.